The following is an 840-amino-acid chain: Translation initiation factor IF-2 (840 aa).

Positions 95-143 are enriched in basic and acidic residues; sequence RSPDEIEAERQRELEEQRAAEEAERLKAEEAAARQRAEEEARKAEEAAR. 2 disordered regions span residues 95–155 and 173–256; these read RSPD…ATAG and PAAV…PTGP. The span at 144–155 shows a compositional bias: low complexity; that stretch reads AKAAQEAAATAG. 2 stretches are compositionally biased toward basic and acidic residues: residues 175–191 and 223–232; these read AVEE…PKRD and STDEESDGYR. Residues 233–247 are compositionally biased toward basic residues; sequence RGGRGGKSKLKKRNQ. Positions 340–509 constitute a tr-type G domain; sequence TRAPVVTVMG…LLQAEVLELK (170 aa). Residues 349–356 are G1; that stretch reads GHVDHGKT. GTP is bound at residue 349 to 356; that stretch reads GHVDHGKT. The interval 374–378 is G2; it reads GITQH. The G3 stretch occupies residues 395 to 398; that stretch reads DTPG. Residues 395–399 and 449–452 contribute to the GTP site; these read DTPGH and NKID. Positions 449–452 are G4; that stretch reads NKID. The segment at 485–487 is G5; the sequence is SAK.

The protein belongs to the TRAFAC class translation factor GTPase superfamily. Classic translation factor GTPase family. IF-2 subfamily.

It localises to the cytoplasm. Its function is as follows. One of the essential components for the initiation of protein synthesis. Protects formylmethionyl-tRNA from spontaneous hydrolysis and promotes its binding to the 30S ribosomal subunits. Also involved in the hydrolysis of GTP during the formation of the 70S ribosomal complex. The polypeptide is Translation initiation factor IF-2 (Pseudomonas aeruginosa (strain ATCC 15692 / DSM 22644 / CIP 104116 / JCM 14847 / LMG 12228 / 1C / PRS 101 / PAO1)).